Consider the following 511-residue polypeptide: Aminotransferase FGSG_17085 (511 aa).

Position 165 to 166 (165 to 166) interacts with pyridoxal 5'-phosphate; the sequence is GA. Substrate is bound at residue Y200. D310 is a pyridoxal 5'-phosphate binding site. N6-(pyridoxal phosphate)lysine is present on K339. Residue G371 participates in substrate binding. 372–373 contributes to the pyridoxal 5'-phosphate binding site; that stretch reads HT.

The protein belongs to the class-III pyridoxal-phosphate-dependent aminotransferase family. Pyridoxal 5'-phosphate serves as cofactor.

It participates in secondary metabolite biosynthesis. Aminotransferase; part of the gene cluster that mediates the biosynthesis of the lipopeptide fusaristatin A. Fusaristatin A consists of a polyketide chain linked to three amino acid residues glutamine (Gln), dehydroalanine (dehydro-Ala), and beta-aminoisobutyric acid. The biosynthesis starts with formation of a linear polyketide chain by the highly reducing polyketide synthase PKS6. The gene cluster does not contain an acyl-CoA ligase or an acyl-transferase, and it is therefore predicted that the polyketide is transferred directly to the nonribosomal peptide synthetase NRPS7. Modules 1-3 from NRPS7 incorporate dehydro-Ala, Gln, and beta-aminoisobutyric acid in the compound, which is released by cyclization. The beta-aminoisobutyric acid units are most likely not freely available to the NRPS, but can be synthesized from thymine, which requires a dehydrogenase, a monooxygenase, and an aminotransferase. The fusaristatin A cluster contains a cytochrome P450 monooxygenase (FGSG_08207) and an aminotransferase (FGSG_17085), which theoretically can perform two of the enzymatic steps. The enzymes may however also be involved in biosynthesis of dehydroalanine or modification of the polyketide. The dehydro-Ala residue can be a result of cyclization, where serine is dehydrated. The last gene of the cluster encodes a protein with an A/B barrel domain found in variable enzymes, which hampers functional prediction. This is Aminotransferase FGSG_17085 from Gibberella zeae (strain ATCC MYA-4620 / CBS 123657 / FGSC 9075 / NRRL 31084 / PH-1) (Wheat head blight fungus).